A 222-amino-acid polypeptide reads, in one-letter code: Small ribosomal subunit protein uS7m (222 aa).

The protein belongs to the universal ribosomal protein uS7 family. As to quaternary structure, part of the small ribosomal subunit.

It is found in the mitochondrion. Its function is as follows. One of the primary rRNA binding proteins, it binds directly to 18S rRNA where it nucleates assembly of the head domain of the small subunit. This is Small ribosomal subunit protein uS7m (RPS7) from Prototheca wickerhamii.